The chain runs to 233 residues: Probable 2-phosphosulfolactate phosphatase (233 aa).

The protein belongs to the ComB family. Requires Mg(2+) as cofactor.

It carries out the reaction (2R)-O-phospho-3-sulfolactate + H2O = (2R)-3-sulfolactate + phosphate. In Clostridium tetani (strain Massachusetts / E88), this protein is Probable 2-phosphosulfolactate phosphatase.